A 159-amino-acid polypeptide reads, in one-letter code: MAQVKRLLINYKTLEEFKQFKEYGIQELSMLEDLESNMIENDSNSPFYGIYFGDKLVARMSLYQVDGSTTTYFNHNHDYLELWKLEVLPGYQRKGYGEALVEFAKSFGLPIRTNPRVKSAGFWDKMGFESVKYDMERDKGENPLIWEPAHIQKNTGESA.

The region spanning 7-151 (LLINYKTLEE…NPLIWEPAHI (145 aa)) is the N-acetyltransferase domain.

This is an uncharacterized protein from Bacillus pumilus (strain SAFR-032).